The primary structure comprises 521 residues: ATP synthase subunit beta (521 aa).

2 stretches are compositionally biased toward low complexity: residues 1 to 21 (MAKA…AAKA) and 28 to 42 (PKTT…TKSG). The interval 1–42 (MAKAATPKTTAAAEAKPAAKAPAKKAAPKTTAAAKPAATKSG) is disordered. Position 199-206 (199-206 (GGAGVGKT)) interacts with ATP.

It belongs to the ATPase alpha/beta chains family. In terms of assembly, F-type ATPases have 2 components, CF(1) - the catalytic core - and CF(0) - the membrane proton channel. CF(1) has five subunits: alpha(3), beta(3), gamma(1), delta(1), epsilon(1). CF(0) has three main subunits: a(1), b(2) and c(9-12). The alpha and beta chains form an alternating ring which encloses part of the gamma chain. CF(1) is attached to CF(0) by a central stalk formed by the gamma and epsilon chains, while a peripheral stalk is formed by the delta and b chains.

The protein localises to the cell inner membrane. It catalyses the reaction ATP + H2O + 4 H(+)(in) = ADP + phosphate + 5 H(+)(out). In terms of biological role, produces ATP from ADP in the presence of a proton gradient across the membrane. The catalytic sites are hosted primarily by the beta subunits. The polypeptide is ATP synthase subunit beta (Brucella canis (strain ATCC 23365 / NCTC 10854 / RM-666)).